Here is a 631-residue protein sequence, read N- to C-terminus: Mercuric reductase (631 aa).

HMA domains follow at residues Lys2–Gly66 and Lys81–Gly145. Residues Cys13, Cys16, Cys92, and Cys95 each coordinate a metal cation. FAD contacts are provided by Ala181, Gly201, and Thr206. A disulfide bond links Cys207 and Cys212. Lys216, Asp472, and Val480 together coordinate FAD. Cys628 and Cys629 together coordinate Hg(2+).

The protein belongs to the class-I pyridine nucleotide-disulfide oxidoreductase family. Homodimer. The cofactor is FAD.

The catalysed reaction is Hg + NADP(+) + H(+) = Hg(2+) + NADPH. Resistance to Hg(2+) in bacteria appears to be governed by a specialized system which includes mercuric reductase. MerA protein is responsible for volatilizing mercury as Hg(0). This Bacillus cereus protein is Mercuric reductase (merA).